We begin with the raw amino-acid sequence, 89 residues long: Small ribosomal subunit protein uS15 (89 aa).

This sequence belongs to the universal ribosomal protein uS15 family. Part of the 30S ribosomal subunit. Forms a bridge to the 50S subunit in the 70S ribosome, contacting the 23S rRNA.

Functionally, one of the primary rRNA binding proteins, it binds directly to 16S rRNA where it helps nucleate assembly of the platform of the 30S subunit by binding and bridging several RNA helices of the 16S rRNA. Its function is as follows. Forms an intersubunit bridge (bridge B4) with the 23S rRNA of the 50S subunit in the ribosome. The chain is Small ribosomal subunit protein uS15 from Proteus mirabilis (strain HI4320).